A 528-amino-acid chain; its full sequence is Protein MGF 505-7R (528 aa).

ANK repeat units lie at residues 54-83 (SIND…NLHY) and 261-291 (NIHR…PPNT).

The protein belongs to the asfivirus MGF 505 family. In terms of assembly, interacts with host STING1. Interacts with host JAK1; this interaction leads to JAK1 degradation. Interacts with host JAK2; this interaction leads to JAK2 degradation. Interacts with host RELA; this interaction inhibits NF-kappa-B promoter activity.

The protein resides in the host cytoplasm. Its function is as follows. Plays a role in virus cell tropism, and may be required for efficient virus replication in macrophages. Interferes with host NF-kappa-B promoter activity mediated by TLR8. Mechanistically, inhibits the phosphorylation and subsequent nuclear translocation of host NF-kappa-B RELA subunit downstream of TLR8. Promotes the expression of the autophagy-related protein host ULK1 to degrade host STING and inhibit the interferon response. Also inhibits JAK1- and JAK2-mediated signaling and thus negatively regulates the IFN-gamma signaling. The sequence is that of Protein MGF 505-7R from African swine fever virus (isolate Tick/Malawi/Lil 20-1/1983) (ASFV).